Here is a 233-residue protein sequence, read N- to C-terminus: Ion-translocating oxidoreductase complex subunit E (233 aa).

Helical transmembrane passes span 18-38 (ALVQ…ATNA), 39-59 (LGLG…VSAL), 69-89 (IPIY…LINA), 92-112 (FGLY…CIVI), 128-148 (ALDG…LGAL), and 182-202 (PFLL…LLAG).

This sequence belongs to the NqrDE/RnfAE family. The complex is composed of six subunits: RnfA, RnfB, RnfC, RnfD, RnfE and RnfG.

The protein localises to the cell inner membrane. In terms of biological role, part of a membrane-bound complex that couples electron transfer with translocation of ions across the membrane. This is Ion-translocating oxidoreductase complex subunit E from Yersinia pseudotuberculosis serotype IB (strain PB1/+).